Reading from the N-terminus, the 317-residue chain is Porphobilinogen deaminase (317 aa).

Cys-245 carries the S-(dipyrrolylmethanemethyl)cysteine modification.

It belongs to the HMBS family. Monomer. Dipyrromethane serves as cofactor.

The enzyme catalyses 4 porphobilinogen + H2O = hydroxymethylbilane + 4 NH4(+). It functions in the pathway porphyrin-containing compound metabolism; protoporphyrin-IX biosynthesis; coproporphyrinogen-III from 5-aminolevulinate: step 2/4. The protein operates within porphyrin-containing compound metabolism; chlorophyll biosynthesis. In terms of biological role, tetrapolymerization of the monopyrrole PBG into the hydroxymethylbilane pre-uroporphyrinogen in several discrete steps. In Synechococcus sp. (strain RCC307), this protein is Porphobilinogen deaminase.